Here is a 360-residue protein sequence, read N- to C-terminus: Nucleoporin SEH1-A (360 aa).

WD repeat units follow at residues 10 to 49 (DHKDLIHDVSFDFHGRRMATCSSDQSVKVWDKSENGNWHC), 55 to 96 (THSG…SNDK), 111 to 152 (DSRT…NLSQ), 160 to 210 (SCKL…RKYA), 217 to 258 (SVSD…KELS), and 276 to 315 (NHNSQVWRVSWNITGTVLASSGDDGTVRLWKANYMDNWKC).

This sequence belongs to the WD repeat SEC13 family. In terms of assembly, component of the Nup107-160 subcomplex of the nuclear pore complex (NPC). The Nup107-160 subcomplex includes NUP160, NUP133, NUP107, NUP98, NUP85, NUP43, NUP37, SEH1 and SEC13. Component of the GATOR2 subcomplex, composed of MIOS, SEC13, SEH1L, WDR24 and WDR59. The GATOR2 complex interacts with CASTOR1 and CASTOR2; the interaction is negatively regulated by arginine. The GATOR2 complex interacts with SESN1, SESN2 and SESN3; the interaction is negatively regulated by amino acids.

It is found in the chromosome. Its subcellular location is the centromere. It localises to the kinetochore. The protein localises to the nucleus. The protein resides in the nuclear pore complex. It is found in the lysosome membrane. The GATOR2 complex is negatively regulated by the upstream amino acid sensors CASTOR1 and SESN2, which sequester the GATOR2 complex in absence of amino acids. In the presence of abundant amino acids, GATOR2 is released from CASTOR1 and SESN2 and activated. Functionally, component of the Nup107-160 subcomplex of the nuclear pore complex (NPC). The Nup107-160 subcomplex is required for the assembly of a functional NPC. The Nup107-160 subcomplex is also required for normal kinetochore microtubule attachment, mitotic progression and chromosome segregation. This subunit plays a role in recruitment of the Nup107-160 subcomplex to the kinetochore. Its function is as follows. As a component of the GATOR2 complex, functions as an activator of the amino acid-sensing branch of the mTORC1 signaling pathway. The GATOR2 complex indirectly activates mTORC1 through the inhibition of the GATOR1 subcomplex. GATOR2 probably acts as an E3 ubiquitin-protein ligase toward GATOR1. In the presence of abundant amino acids, the GATOR2 complex mediates ubiquitination of the NPRL2 core component of the GATOR1 complex, leading to GATOR1 inactivation. In the absence of amino acids, GATOR2 is inhibited, activating the GATOR1 complex. The polypeptide is Nucleoporin SEH1-A (seh1l-a) (Xenopus laevis (African clawed frog)).